Here is a 178-residue protein sequence, read N- to C-terminus: Large ribosomal subunit protein uL6 (178 aa).

It belongs to the universal ribosomal protein uL6 family. As to quaternary structure, part of the 50S ribosomal subunit.

Its function is as follows. This protein binds to the 23S rRNA, and is important in its secondary structure. It is located near the subunit interface in the base of the L7/L12 stalk, and near the tRNA binding site of the peptidyltransferase center. The protein is Large ribosomal subunit protein uL6 of Coxiella burnetii (strain CbuK_Q154) (Coxiella burnetii (strain Q154)).